A 677-amino-acid polypeptide reads, in one-letter code: Polyunsaturated fatty acid lipoxygenase ALOX8 (677 aa).

The region spanning 2–125 (AKCRVRVSTG…ELVLREGAAK (124 aa)) is the PLAT domain. Ca(2+) contacts are provided by Gly-15, Gly-17, Asp-39, His-40, Gly-42, Glu-44, Asp-86, and Ala-87. The Lipoxygenase domain occupies 126–677 (VSWQDHHPTL…PPLIENSVSI (552 aa)). Residues His-374, His-379, His-554, and Ile-677 each coordinate Fe cation.

It belongs to the lipoxygenase family. It depends on Fe cation as a cofactor. In terms of tissue distribution, expressed in epidermis and brain. No expression found in heart, spleen, liver, skeletal muscle, kidney or testis.

Its subcellular location is the cytoplasm. The protein localises to the cytosol. It localises to the membrane. The catalysed reaction is (9Z,12Z)-octadecadienoate + O2 = (9S)-hydroperoxy-(10E,12Z)-octadecadienoate. It catalyses the reaction (5Z,8Z,11Z,14Z)-eicosatetraenoate + O2 = (8S)-hydroperoxy-(5Z,9E,11Z,14Z)-eicosatetraenoate. The enzyme catalyses (15S)-hydroperoxy-(5Z,8Z,11Z,13E)-eicosatetraenoate + O2 = (8S,15S)-dihydroperoxy-(5Z,9E,11Z,13E)-eicosatetraenoate. It carries out the reaction (8S)-hydroperoxy-(5Z,9E,11Z,14Z)-eicosatetraenoate + O2 = (8S,15S)-dihydroperoxy-(5Z,9E,11Z,13E)-eicosatetraenoate. The catalysed reaction is 1-octadecanoyl-2-(5Z,8Z,11Z,14Z-eicosatetraenoyl)-sn-glycero-3-phosphocholine + O2 = 1-octadecanoyl-2-(15-hydroperoxy-5Z,8Z,11Z,13E-eicosatetraenoyl)-sn-glycero-3-phosphocholine. It catalyses the reaction a 1-acyl-2-(5Z,8Z,11Z,14Z-eicosatetraenoyl)-sn-glycero-3-phospho-(1D-myo-inositol) + O2 = a 1-acyl-2-(15-hydroperoxy-5Z,8Z,11Z,13E-eicosatetraenoyl)-sn-glycero-3-phospho-(1D-myo-inositol). The enzyme catalyses a 1-acyl-2-(8Z,11Z,14Z-eicosatrienoyl)-sn-glycero-3-phospho-(1D-myo-inositol) + O2 = a 1-acyl-2-(15-hydroperoxy-8Z,11Z,13E-eicosatrienoyl)-sn-glycero-3-phospho-(1D-myo-inositol). It carries out the reaction (5Z,8Z,11Z,14Z)-eicosatetraenoate + O2 = 9-hydroperoxy-(5Z,7E,11Z,14Z)-eicosatetraenoate. The catalysed reaction is (5Z,8Z,11Z,14Z)-eicosatetraenoate + O2 = 11-hydroperoxy-(5Z,8Z,12E,14Z)-eicosatetraenoate. It catalyses the reaction (8Z,11Z,14Z)-eicosatrienoate + O2 = 15-hydroperoxy-(8Z,11Z,13E)-eicosatrienoate. It participates in lipid metabolism; hydroperoxy eicosatetraenoic acid biosynthesis. In terms of biological role, non-heme iron-containing dioxygenase that catalyzes the stereo-specific peroxidation of free and esterified polyunsaturated fatty acids generating a spectrum of bioactive lipid mediators. Catalyzes the peroxidation of arachidonate and linoleate into (8S)-HPETE and (9S)-HPODE respectively. In addition to generate (8S)-HPETE from free arachidonic acid (AA), may produce other HETE isomers from phospholipid-esterified polyunsaturated fatty acids and minor products derived from (8S)-HPETE itself that may include leukotriene A4 and 8,15-diHPETE. With free arachidonate as substrate, has no detectable 15S-lipoxygenase activity and only displays a 8S-lipoxygenase activity. However may have a 15S-lipoxygenase activity with (8S)-HPETE to produce (8S,15S)-diHPETE and when oxidizes directly arachidonic acid esterified to membrane-bound phospholipids to produce a phospholipid-esterified 15-HpETE. May also catalyze (15S)-HPETE peroxidation to produce 8,15-diHPETE. May play a role in keratinocyte differentiation through activation of the peroxisome proliferator activated receptor signaling pathway. This Mus musculus (Mouse) protein is Polyunsaturated fatty acid lipoxygenase ALOX8.